Reading from the N-terminus, the 344-residue chain is Putative voltage-gated potassium channel subunit beta (344 aa).

Residues Trp-33, Asp-62, Tyr-67, Ser-167, Gln-193, Trp-222, Ser-223, Pro-224, Leu-225, Lys-233, Arg-243, Gly-301, Ser-303, Gln-307, Glu-310, and Asn-311 each coordinate NADP(+). The Proton donor/acceptor role is filled by Tyr-67.

This sequence belongs to the shaker potassium channel beta subunit family. Forms heteromultimeric complexes with potassium channel alpha subunits.

The protein resides in the cytoplasm. It is found in the nucleus. Its function is as follows. Probable accessory potassium channel protein which modulates the activity of the pore-forming alpha subunit. The polypeptide is Putative voltage-gated potassium channel subunit beta (Schizosaccharomyces pombe (strain 972 / ATCC 24843) (Fission yeast)).